A 313-amino-acid chain; its full sequence is Alpha/beta-gliadin clone PW8142 (313 aa).

Positions 1–20 (MKTFLILALVATTATTAVRV) are cleaved as a signal peptide. Residues 22-55 (VPQLQPKNPSQQQPQEQVPLVQQQQFPGQQQQFP) show a composition bias toward low complexity. Disordered stretches follow at residues 22 to 122 (VPQL…QQAQ) and 234 to 272 (QQPS…VQPQ). Composition is skewed to pro residues over residues 56–68 (PQQP…PFPS) and 78–101 (FPQP…PQQP). Composition is skewed to low complexity over residues 102–122 (YPQQ…QQAQ) and 234–264 (QQPS…QNPQ).

Belongs to the gliadin/glutenin family. Post-translationally, substrate of transglutaminase.

In terms of biological role, gliadin is the major seed storage protein in wheat. The protein is Alpha/beta-gliadin clone PW8142 of Triticum aestivum (Wheat).